The primary structure comprises 332 residues: UPF0194 membrane protein YbhG (332 aa).

An N-terminal signal peptide occupies residues 1-26 (MMKKPVVIELAVVVLAAVVAGGYWWY). The stretch at 108-209 (EEIAQAAAAV…LNLQDSTLIA (102 aa)) forms a coiled coil.

Belongs to the UPF0194 family.

It localises to the periplasm. In Shigella sonnei (strain Ss046), this protein is UPF0194 membrane protein YbhG (ybhG).